A 367-amino-acid polypeptide reads, in one-letter code: Pepsin A (367 aa).

Positions 1–42 (SIHRVPLKKGKSLRKQLKDHGLLEDFLKKHPYNPASKYHPVL) are cleaved as a propeptide — activation peptide. Residues 59 to 364 (YYGTISIGTP…DRANNKVGLS (306 aa)) enclose the Peptidase A1 domain. Asp-77 is an active-site residue. Cys-90 and Cys-95 are joined by a disulfide. Asn-113 is a glycosylation site (N-linked (GlcNAc...) asparagine). A disulfide bond links Cys-251 and Cys-255. Asp-260 is a catalytic residue. Cys-290 and Cys-323 are oxidised to a cystine.

The protein belongs to the peptidase A1 family.

The catalysed reaction is Preferential cleavage: hydrophobic, preferably aromatic, residues in P1 and P1' positions. Cleaves 1-Phe-|-Val-2, 4-Gln-|-His-5, 13-Glu-|-Ala-14, 14-Ala-|-Leu-15, 15-Leu-|-Tyr-16, 16-Tyr-|-Leu-17, 23-Gly-|-Phe-24, 24-Phe-|-Phe-25 and 25-Phe-|-Tyr-26 bonds in the B chain of insulin.. Shows particularly broad specificity; although bonds involving phenylalanine and leucine are preferred, many others are also cleaved to some extent. The polypeptide is Pepsin A (PGA) (Gallus gallus (Chicken)).